We begin with the raw amino-acid sequence, 217 residues long: Enoyl-CoA-hydratase (217 aa).

It belongs to the enoyl-CoA hydratase/isomerase family.

The catalysed reaction is a (3S)-3-hydroxyacyl-CoA = a (2E)-enoyl-CoA + H2O. It catalyses the reaction a 4-saturated-(3S)-3-hydroxyacyl-CoA = a (3E)-enoyl-CoA + H2O. It functions in the pathway antibiotic biosynthesis; vancomycin biosynthesis. In terms of biological role, involved in the biosynthesis of the nonproteinogenic amino acid monomer (S)-3,5-dihydroxyphenylglycine (Dpg) responsible of the production of vancomycin and teicoplanin antibiotics. Catalyzes the syn-addition of a water molecule across the double bond of a trans-2-enoyl-CoA thioester, resulting in the formation of a beta-hydroxyacyl-CoA thioester. Physiologically, DpgB could act as a dehydratase, facilitating the aromatization of the DPA-S-DgpA or DPA-S-CoA intermediate. The polypeptide is Enoyl-CoA-hydratase (dpgB) (Amycolatopsis orientalis (Nocardia orientalis)).